Reading from the N-terminus, the 403-residue chain is Octaketide synthase 2 (403 aa).

Cysteine 174 is an active-site residue. CoA contacts are provided by residues serine 281 and 318–321; that span reads GGRA.

The protein belongs to the thiolase-like superfamily. Chalcone/stilbene synthases family. In terms of assembly, homodimer.

It functions in the pathway secondary metabolite biosynthesis; flavonoid biosynthesis. Its function is as follows. Catalyzes the iterative condensations of 8 molecules of malonyl-CoA to produce aromatic octaketides, SEK4 and SEK4b, the products of the minimal polyketide synthase for the benzoisochromanequinone actinorhodin. May be involved in the biosynthesis of the octaketide barbaloin. This chain is Octaketide synthase 2 (PKS4), found in Aloe arborescens (Kidachi aloe).